We begin with the raw amino-acid sequence, 182 residues long: ATP synthase subunit delta (182 aa).

It belongs to the ATPase delta chain family. F-type ATPases have 2 components, F(1) - the catalytic core - and F(0) - the membrane proton channel. F(1) has five subunits: alpha(3), beta(3), gamma(1), delta(1), epsilon(1). F(0) has three main subunits: a(1), b(2) and c(10-14). The alpha and beta chains form an alternating ring which encloses part of the gamma chain. F(1) is attached to F(0) by a central stalk formed by the gamma and epsilon chains, while a peripheral stalk is formed by the delta and b chains.

It localises to the cell inner membrane. F(1)F(0) ATP synthase produces ATP from ADP in the presence of a proton or sodium gradient. F-type ATPases consist of two structural domains, F(1) containing the extramembraneous catalytic core and F(0) containing the membrane proton channel, linked together by a central stalk and a peripheral stalk. During catalysis, ATP synthesis in the catalytic domain of F(1) is coupled via a rotary mechanism of the central stalk subunits to proton translocation. In terms of biological role, this protein is part of the stalk that links CF(0) to CF(1). It either transmits conformational changes from CF(0) to CF(1) or is implicated in proton conduction. The sequence is that of ATP synthase subunit delta from Myxococcus xanthus (strain DK1622).